The sequence spans 143 residues: Small ribosomal subunit protein eS12 (143 aa).

Glycyl lysine isopeptide (Lys-Gly) (interchain with G-Cter in ubiquitin) cross-links involve residues Lys-85, Lys-95, and Lys-114.

Belongs to the eukaryotic ribosomal protein eS12 family. Component of the small ribosomal subunit (SSU). Mature yeast ribosomes consist of a small (40S) and a large (60S) subunit. The 40S small subunit contains 1 molecule of ribosomal RNA (18S rRNA) and 33 different proteins (encoded by 57 genes). The large 60S subunit contains 3 rRNA molecules (25S, 5.8S and 5S rRNA) and 46 different proteins (encoded by 81 genes).

It is found in the cytoplasm. Functionally, component of the ribosome, a large ribonucleoprotein complex responsible for the synthesis of proteins in the cell. The small ribosomal subunit (SSU) binds messenger RNAs (mRNAs) and translates the encoded message by selecting cognate aminoacyl-transfer RNA (tRNA) molecules. The large subunit (LSU) contains the ribosomal catalytic site termed the peptidyl transferase center (PTC), which catalyzes the formation of peptide bonds, thereby polymerizing the amino acids delivered by tRNAs into a polypeptide chain. The nascent polypeptides leave the ribosome through a tunnel in the LSU and interact with protein factors that function in enzymatic processing, targeting, and the membrane insertion of nascent chains at the exit of the ribosomal tunnel. The chain is Small ribosomal subunit protein eS12 from Saccharomyces cerevisiae (strain ATCC 204508 / S288c) (Baker's yeast).